Reading from the N-terminus, the 521-residue chain is 3,4-dihydroxyphenylacetaldehyde synthase (521 aa).

An N6-(pyridoxal phosphate)lysine modification is found at lysine 306.

This sequence belongs to the group II decarboxylase family. It depends on pyridoxal 5'-phosphate as a cofactor. Highly expressed in the cuticle and midgut. Low expression in the head and thorax.

It catalyses the reaction L-dopa + O2 + H2O + H(+) = 3,4-dihydroxyphenylacetaldehyde + H2O2 + NH4(+) + CO2. Catalyzes the decarboxylation-oxidative deamination of L-3,4-dihydroxyphenylalanine (L-DOPA) to 3,4-dihydroxylphenylacetaldehyde (DHPAA). Involved in cuticle development. Probably responsible for the protein cross-linking during the development of flexible cuticles. This is 3,4-dihydroxyphenylacetaldehyde synthase from Aedes aegypti (Yellowfever mosquito).